A 140-amino-acid polypeptide reads, in one-letter code: Actin-depolymerizing factor 10 (140 aa).

Phosphoserine is present on S6. The 133-residue stretch at 7 to 139 (GMHVSDECKL…SLDIIKGRVN (133 aa)) folds into the ADF-H domain.

It belongs to the actin-binding proteins ADF family.

It is found in the cytoplasm. The protein resides in the cytoskeleton. Actin-depolymerizing protein. Severs actin filaments (F-actin) and binds to actin monomers. In Arabidopsis thaliana (Mouse-ear cress), this protein is Actin-depolymerizing factor 10 (ADF10).